We begin with the raw amino-acid sequence, 404 residues long: Zinc metalloprotease Rip1 (404 aa).

The chain crosses the membrane as a helical span at residues 1 to 21; the sequence is MMFVTGIVLFALAILISVALH. His21 lines the Zn(2+) pocket. Residue Glu22 is part of the active site. His25 is a binding site for Zn(2+). The helical transmembrane segment at 104-124 threads the bilayer; that stretch reads PGMNLAICLVLIYAIALVWGL. The PDZ domain maps to 121-203; the sequence is VWGLPNLHPP…SVPIVVERDG (83 aa). Residue Asp202 participates in Zn(2+) binding. Transmembrane regions (helical) follow at residues 313 to 333 and 373 to 393; these read LWVA…TINL and LLPA…LTVT.

Belongs to the peptidase M50B family. Requires Zn(2+) as cofactor.

It localises to the cell membrane. Functionally, a probable intramembrane site-2 protease (S2P) that cleaves type-2 transmembrane proteins within their membrane-spanning domains. Cleaves PbpB (PBP3, FtsI); cleavage is inhibited by Wag31-PbpB interaction. Probably also cleaves anti-sigma factors RskA, RslA and RsmA. In terms of biological role, regulated intramembrane proteolysis (RIP) occurs when an extracytoplasmic signal (possibly oxidative stress) triggers a concerted proteolytic cascade to transmit information and elicit cellular responses. The membrane-spanning regulatory substrate protein (includes anti-sigma factors RskA, RslA, RsmA, and PbpB in M.tuberculosis) is first cut extracytoplasmically (site-1 protease, S1P), then within the membrane itself (site-2 protease, S2P, this entry), while cytoplasmic proteases finish degrading the regulatory protein, liberating the effector protein (ECF sigma factors SigK, SigL and SigM). This is Zinc metalloprotease Rip1 (rip1) from Mycobacterium bovis (strain BCG / Pasteur 1173P2).